Consider the following 1200-residue polypeptide: Chromosome partition protein Smc (1200 aa).

Residue 33-40 (PNGSGKSN) coordinates ATP. The disordered stretch occupies residues 90–109 (GENLSEPGANHNGNGNGAKI). The stretch at 202-528 (EVQDREERCQ…AASQAQQEVQ (327 aa)) forms a coiled coil. The 115-residue stretch at 542–656 (PGVCGLVAQL…VFDTLVNARN (115 aa)) folds into the SMC hinge domain. Positions 692–1046 (TMVSEDTAEV…ERTELLLRIE (355 aa)) form a coiled coil.

It belongs to the SMC family. Homodimer.

The protein localises to the cytoplasm. In terms of biological role, required for chromosome condensation and partitioning. The protein is Chromosome partition protein Smc of Synechocystis sp. (strain ATCC 27184 / PCC 6803 / Kazusa).